Here is a 298-residue protein sequence, read N- to C-terminus: Protein ABIL1 (298 aa).

Belongs to the ABI family. In terms of assembly, binds SCAR2. Expressed in seedlings, roots, hypocotyls, cotyledons, leaves, stems, and flowers.

The protein resides in the cytoplasm. Its subcellular location is the cytoskeleton. Functionally, involved in regulation of actin and microtubule organization. Part of a WAVE complex that activates the Arp2/3 complex. This chain is Protein ABIL1 (ABIL1), found in Arabidopsis thaliana (Mouse-ear cress).